The sequence spans 350 residues: Ion-translocating oxidoreductase complex subunit D (350 aa).

5 helical membrane passes run 15 to 35 (QTQT…LAQT), 36 to 56 (WFFG…ALGA), 67 to 87 (PIKP…IGLS), 88 to 108 (LPPL…IIIA), and 122 to 142 (PAMV…TSWL). Position 186 is an FMN phosphoryl threonine (T186). Helical transmembrane passes span 213–233 (WGGI…LFLL), 242–262 (IPGA…LMTP), 264–284 (ATAT…AFFI), and 299–316 (LVYG…RRFG).

Belongs to the NqrB/RnfD family. In terms of assembly, the complex is composed of six subunits: RnfA, RnfB, RnfC, RnfD, RnfE and RnfG. FMN serves as cofactor.

The protein localises to the cell inner membrane. Its function is as follows. Part of a membrane-bound complex that couples electron transfer with translocation of ions across the membrane. In Aeromonas salmonicida (strain A449), this protein is Ion-translocating oxidoreductase complex subunit D.